A 564-amino-acid polypeptide reads, in one-letter code: O-fucosyltransferase 5 (564 aa).

The interval 1-28 (MVRNSSDEEEDHRNLIPQNDTRDNDLNL) is disordered. A helical; Signal-anchor for type II membrane protein transmembrane segment spans residues 70 to 90 (YVVAAVSLTLFVGLLFLFTDT). 3 N-linked (GlcNAc...) asparagine glycosylation sites follow: asparagine 129, asparagine 134, and asparagine 174. Substrate-binding positions include 413-415 (HLR) and 529-530 (TF).

The protein belongs to the glycosyltransferase GT106 family.

It is found in the membrane. It participates in glycan metabolism. This is O-fucosyltransferase 5 from Arabidopsis thaliana (Mouse-ear cress).